Consider the following 151-residue polypeptide: MGRMHNPGKGMAKSAIPYRRSVPSWQKMTAEEVQDQIVKMAKKGLRPSQIGVILRDSHGVGQVRRLAGNKIFRILKSKGMAPELPEDLYHLVKKAVAIRKHLERSRKDIDSKYRLILVESRIHRLARYYKTKRQLPPTWKYESGTAASLVS.

The protein belongs to the universal ribosomal protein uS15 family. As to quaternary structure, component of the small ribosomal subunit. Part of the small subunit (SSU) processome, composed of more than 70 proteins and the RNA chaperone small nucleolar RNA (snoRNA) U3.

It is found in the cytoplasm. The protein localises to the nucleus. Its subcellular location is the nucleolus. In terms of biological role, component of the small ribosomal subunit. The ribosome is a large ribonucleoprotein complex responsible for the synthesis of proteins in the cell. Part of the small subunit (SSU) processome, first precursor of the small eukaryotic ribosomal subunit. During the assembly of the SSU processome in the nucleolus, many ribosome biogenesis factors, an RNA chaperone and ribosomal proteins associate with the nascent pre-rRNA and work in concert to generate RNA folding, modifications, rearrangements and cleavage as well as targeted degradation of pre-ribosomal RNA by the RNA exosome. The sequence is that of Small ribosomal subunit protein uS15 (rps-13) from Caenorhabditis elegans.